The primary structure comprises 804 residues: Leucine--tRNA ligase (804 aa).

Residues 40–51 carry the 'HIGH' region motif; sequence PYPSGAGLHVGH. The 'KMSKS' region signature appears at 576-580; it reads KMSKS. Lys579 contacts ATP.

It belongs to the class-I aminoacyl-tRNA synthetase family.

It is found in the cytoplasm. The enzyme catalyses tRNA(Leu) + L-leucine + ATP = L-leucyl-tRNA(Leu) + AMP + diphosphate. This Bacillus pumilus (strain SAFR-032) protein is Leucine--tRNA ligase.